Consider the following 82-residue polypeptide: Lectin-D2 (82 aa).

Chitin-binding type-1 domains follow at residues 1 to 42 and 43 to 82; these read APEC…QCDY and WRCG…SQCD. Intrachain disulfides connect C4–C19, C13–C25, C18–C32, and C36–C40. A carbohydrate-binding residues include S20, W22, Y24, and Y31. Position 43 (W43) interacts with a carbohydrate. Disulfide bonds link C45/C60, C54/C66, C59/C73, and C77/C81. S61, Y63, W65, and H72 together coordinate a carbohydrate.

Monomer.

In terms of biological role, N-acetyl-D-glucosamine binding lectin. Shows no hemagglutinating activity towards rabbit erythrocytes and weak activity towards trypsin-treated erythrocytes. Has mitogenic activity towards human peripheral blood lymphocytes (HPBL). The protein is Lectin-D2 of Phytolacca americana (American pokeweed).